We begin with the raw amino-acid sequence, 251 residues long: MNVADLLHVLNELLYPELFNDYGPNGLQVGDAQAPVRKIAVAVTADLATIEKAIACESNVLLVHHGLFWKGMPYPITGMLYQRMQRLIENNIQLIAYHLPLDAHPEVGNNWKVAKDLGWERLESFGSTKPSLGVKGVFPEIGIHDFVSQLSSYYQAPVLAKALGGKESISSAALISGGAYKEISEAKSQEVDCFITGNFDEPAWSLAHELAINFLAFGHTATEKVGPKALTQYLKQVGCDSVVFLDTENPF.

Residues His64, His65, Asp102, His219, and Glu223 each contribute to the a divalent metal cation site.

The protein belongs to the GTP cyclohydrolase I type 2/NIF3 family. As to quaternary structure, homohexamer.

This chain is GTP cyclohydrolase 1 type 2 homolog, found in Chlamydia muridarum (strain MoPn / Nigg).